Consider the following 1414-residue polypeptide: DNA-directed RNA polymerase subunit beta' (1414 aa).

Cysteine 70, cysteine 72, cysteine 85, and cysteine 88 together coordinate Zn(2+). Mg(2+) contacts are provided by aspartate 460, aspartate 462, and aspartate 464. Residues cysteine 814, cysteine 888, cysteine 895, and cysteine 898 each contribute to the Zn(2+) site. The interval 1378–1414 (EREAARQLANPFEDAPVTVGGEPEAPAADTPSDDSAE) is disordered.

The protein belongs to the RNA polymerase beta' chain family. The RNAP catalytic core consists of 2 alpha, 1 beta, 1 beta' and 1 omega subunit. When a sigma factor is associated with the core the holoenzyme is formed, which can initiate transcription. Mg(2+) serves as cofactor. Zn(2+) is required as a cofactor.

It carries out the reaction RNA(n) + a ribonucleoside 5'-triphosphate = RNA(n+1) + diphosphate. In terms of biological role, DNA-dependent RNA polymerase catalyzes the transcription of DNA into RNA using the four ribonucleoside triphosphates as substrates. The polypeptide is DNA-directed RNA polymerase subunit beta' (Bordetella bronchiseptica (strain ATCC BAA-588 / NCTC 13252 / RB50) (Alcaligenes bronchisepticus)).